Reading from the N-terminus, the 648-residue chain is MIDIILPDGSVKQYKIGVTGQEIIQSLSISLFKKTIAVAVNNELMDLYIPIINTATVKAITIDSVQGIEILRHDTAHILAQAVKKLFPDTQVVIGPVIKDGFYYDFARDKPFTSKDLEIIEQEMQDIITKNDLIQREVWLRAKAIEFFKQQKEFYKVKLIEEIPESEEISIYRQGNFVDLCRGPHSPSTGYCAKYFKLTKVSGAYWRGNSKNESLQRIYGTAWGKKSDLDSYLHRLSEAQKRDHRKLGRELELFHFQDEAQGMPFWHSKGWTIFKIIKDYISCQIQRAGYIEVNTPMVLNQKLWEKSGHWEKFRENMFTLDTNAAEQDHNLIKDSIETKCALALKPMNCPGHIQIFNYTIKSYRDLPLRMAEFGSCHRYEPSGALYGLMRVRSFVQDDAHIFCTEDQITDETIKFCHLLKQVYQDFGFPEVKIKFSDRPEKRAGTDKIWDKAEQALIHAIQTLGEEYTINRGEGAFYGPKLEFILTDAIGREWQCGTLQVDFVLPERLNASYISSEGSKKRPVILHRAILGSFERFIGILIEHYSGKLPIWLAPIQVAVVSITDEAVNYAKQLHQELIDNNIRSTLDISNQKINYKIRNFFTAKVPLIAILGKKESESGKIAIRTLGSQEQHVISSSELIAHIRKNKK.

The TGS domain occupies 1–61 (MIDIILPDGS…INTATVKAIT (61 aa)). The segment at 243 to 549 (DHRKLGRELE…LIEHYSGKLP (307 aa)) is catalytic. Residues C349, H400, and H526 each coordinate Zn(2+).

This sequence belongs to the class-II aminoacyl-tRNA synthetase family. As to quaternary structure, homodimer. Requires Zn(2+) as cofactor.

It localises to the cytoplasm. The catalysed reaction is tRNA(Thr) + L-threonine + ATP = L-threonyl-tRNA(Thr) + AMP + diphosphate + H(+). In terms of biological role, catalyzes the attachment of threonine to tRNA(Thr) in a two-step reaction: L-threonine is first activated by ATP to form Thr-AMP and then transferred to the acceptor end of tRNA(Thr). Also edits incorrectly charged L-seryl-tRNA(Thr). This is Threonine--tRNA ligase from Orientia tsutsugamushi (strain Ikeda) (Rickettsia tsutsugamushi).